Consider the following 369-residue polypeptide: Mycofactocin maturase MftC (369 aa).

One can recognise a Radical SAM core domain in the interval 16 to 232 (LDAPICLTWE…KGERVLTGDS (217 aa)). [4Fe-4S] cluster-binding residues include cysteine 30, cysteine 34, cysteine 37, cysteine 251, cysteine 258, cysteine 269, cysteine 310, cysteine 313, cysteine 319, cysteine 323, and cysteine 341. The segment at 347–369 (APALAQERHAPRPRVDHSRGSRE) is disordered. Over residues 352–369 (QERHAPRPRVDHSRGSRE) the composition is skewed to basic and acidic residues.

This sequence belongs to the radical SAM superfamily. MftC family. Interacts with MftB. It depends on [4Fe-4S] cluster as a cofactor.

It carries out the reaction [mycofactocin precursor peptide]-C-terminal glycyl-L-valyl-L-tyrosine + S-adenosyl-L-methionine = [mycofactocin precursor peptide]-C-terminal glycyl-N-{[2-(4-hydroxyphenyl)ethenyl]-3-methylbutanamide} + 5'-deoxyadenosine + L-methionine + CO2. It catalyses the reaction [mycofactocin precursor peptide]-C-terminal glycyl-N-{[2-(4-hydroxyphenyl)ethenyl]-3-methylbutanamide} + AH2 + S-adenosyl-L-methionine = [mycofactocin precursor peptide]-C-terminal glycyl-N-{5-[(4-hydroxyphenyl)methyl]-4,4-dimethyl-2-oxopyrrolidin-3-yl}acetamide + 5'-deoxyadenosine + L-methionine + A + H(+). In terms of biological role, radical S-adenosylmethionine (SAM) enzyme responsible for the first step of the biosynthesis of the enzyme cofactor mycofactocin (MFT). Catalyzes two reactions at the C-terminus of the mycofactocin precursor (the MftA peptide). The first one is the oxidative decarboxylation of the C-terminal L-tyrosine of MftA, forming an unsaturated tyramine moiety. The second reaction is the cross-linking of the tyramine with the penultimate L-valine residue, forming a five-membered lactam ring. Its activity requires the presence of the MftB chaperone. The polypeptide is Mycofactocin maturase MftC (Mycobacterium ulcerans (strain Agy99)).